Reading from the N-terminus, the 119-residue chain is Protein yippee-like 2 (119 aa).

The 98-residue stretch at 19–116 (RTYSCIHCRA…IELAHMIKDN (98 aa)) folds into the Yippee domain. Positions 23, 26, 79, and 82 each coordinate Zn(2+).

Belongs to the yippee family. May interact with FAM168B.

The protein resides in the nucleus. The protein localises to the nucleolus. The sequence is that of Protein yippee-like 2 (YPEL2) from Chlorocebus aethiops (Green monkey).